The sequence spans 108 residues: Hrp pili protein HrpA (108 aa).

A compositionally biased stretch (polar residues) spans 41 to 56 (NTGSTDSIDATRSSIS). The tract at residues 41 to 73 (NTGSTDSIDATRSSISKGDAKSAELDGTANEEN) is disordered.

Belongs to the HrpA type 1 family.

It is found in the secreted. It localises to the fimbrium. In terms of biological role, major structural protein of the hrp pilus, which is a component of the type III secretion system (T3SS, Hrp secretion system) required for effector protein delivery, parasitism, and pathogenicity. The hrp pilus functions as a conduit for protein delivery into the host cell. Also, affects the expression of T3SS-associated genes. Required for full expression of genes that encode regulatory, secretion, and effector proteins of the T3SS. HrpA-mediated gene regulation apparently is through effect on the mRNA level of HrpR and HrpS. In Pseudomonas syringae pv. syringae, this protein is Hrp pili protein HrpA (hrpA).